The primary structure comprises 1250 residues: Protein SSD1 (1250 aa).

Positions 1 to 22 are enriched in polar residues; that stretch reads MSKNSNVNNNRSQEPNNMFVQT. The interval 1-32 is disordered; sequence MSKNSNVNNNRSQEPNNMFVQTTGGGKNAPKQ. At S2 the chain carries N-acetylserine. S40 is modified (phosphoserine). The disordered stretch occupies residues 79–163; that stretch reads TGQYLSGNSG…SSIYGHSRRH (85 aa). Polar residues predominate over residues 84–94; sequence SGNSGSNNHFT. Positions 124–145 are enriched in low complexity; the sequence is NNSGYYHNSYDNNNNSNNPGSN. Phosphoserine occurs at positions 164 and 183. The segment covering 197–208 has biased composition (polar residues); that stretch reads QADSGSNSTTEQ. Disordered stretches follow at residues 197 to 338, 418 to 443, and 455 to 517; these read QADS…GGRK, KEKEEKKRRKDASMQHDLIPLNSSDD, and SNNF…DDVE. Phosphothreonine is present on T227. Residues 264–276 show a composition bias toward polar residues; sequence NEYSPGINSNWRN. Low complexity predominate over residues 277 to 287; sequence QSQQPQQQLSP. Residues S286 and S322 each carry the phosphoserine modification. Residues 319-329 show a composition bias toward polar residues; it reads SNSSVHSFSSQ. Residues 481–495 are compositionally biased toward polar residues; the sequence is STINNDSDSLSSPTK. 2 positions are modified to phosphoserine: S491 and S492. A compositionally biased stretch (basic residues) spans 497–510; sequence GVRRRSSLKQRPTQ. A CSD2 domain is found at 582–657; the sequence is AWFKPTDKKV…EIDSILRDNN (76 aa). A Phosphotyrosine modification is found at Y688. In terms of domain architecture, RNB spans 694–1015; it reads DTNEYNIFAI…VHRQLKAVIH (322 aa). A DIS3L2 C-terminal domain is found at 1064–1148; the sequence is GQLLTMATVL…SIKNKFRSTA (85 aa).

The protein belongs to the RNR ribonuclease family.

Can suppress the lethality due to deletion of SIT4, and partially the defects due to BCY1 disruption. Is implicated in the control of the cell cycle G1 phase. The chain is Protein SSD1 (SSD1) from Saccharomyces cerevisiae (strain ATCC 204508 / S288c) (Baker's yeast).